A 749-amino-acid chain; its full sequence is Meiotically up-regulated gene 122 protein (749 aa).

The Cytoplasmic segment spans residues 1 to 20; it reads MYRKWDLCITRHLLPYIEHS. A helical; Signal-anchor for type II membrane protein membrane pass occupies residues 21–41; the sequence is VIPIIALLVLSLIFYILYICF. Residues 42-749 are Lumenal-facing; sequence GTTSYILSGI…LLSNALRSII (708 aa). Residues 88-261 form the PXA domain; that stretch reads PPELEAPLQL…CIILYFSSSE (174 aa). A PX domain is found at 311–422; it reads LHYQFLKEAS…KFFAKSMRSH (112 aa). Disordered stretches follow at residues 439–489 and 504–546; these read QSSS…LSQQ and GSCT…PPKP. Composition is skewed to polar residues over residues 440–461 and 475–489; these read SSSV…NKTS and LSHQ…LSQQ.

Belongs to the sorting nexin family.

The protein localises to the endoplasmic reticulum membrane. Its function is as follows. Has a role in meiosis. The sequence is that of Meiotically up-regulated gene 122 protein (mug122) from Schizosaccharomyces pombe (strain 972 / ATCC 24843) (Fission yeast).